Reading from the N-terminus, the 223-residue chain is Large ribosomal subunit protein uL3 (223 aa).

A disordered region spans residues 137 to 157 (GRASHGNSRSHNVPGSIGMAQ). Gln-157 is subject to N5-methylglutamine.

Belongs to the universal ribosomal protein uL3 family. In terms of assembly, part of the 50S ribosomal subunit. Forms a cluster with proteins L14 and L19. Post-translationally, methylated by PrmB.

Its function is as follows. One of the primary rRNA binding proteins, it binds directly near the 3'-end of the 23S rRNA, where it nucleates assembly of the 50S subunit. The chain is Large ribosomal subunit protein uL3 from Burkholderia pseudomallei (strain 1106a).